The primary structure comprises 222 residues: FCS-Like Zinc finger 13 (222 aa).

An FLZ-type zinc finger spans residues 149 to 192 (EFLSSCCLCKKKLQGKDIYMYKGEMGFCSAECRSVQIMNDERQE).

The protein belongs to the FLZ family. In terms of assembly, interacts with KIN10 and KIN11 via its FLZ-type zinc finger domain. Interacts with KINB1, KINB2, KINB3 and SNF4 via its N-terminal part.

It localises to the nucleus. Its subcellular location is the cytoplasm. May act as an adapter to facilitate the interaction of SnRK1 complex with effector proteins, conferring tissue- and stimulus-type specific differences in the SnRK1 regulation pathway. This is FCS-Like Zinc finger 13 from Arabidopsis thaliana (Mouse-ear cress).